The primary structure comprises 305 residues: Glycine--tRNA ligase alpha subunit (305 aa).

It belongs to the class-II aminoacyl-tRNA synthetase family. In terms of assembly, tetramer of two alpha and two beta subunits.

The protein localises to the cytoplasm. It catalyses the reaction tRNA(Gly) + glycine + ATP = glycyl-tRNA(Gly) + AMP + diphosphate. The polypeptide is Glycine--tRNA ligase alpha subunit (Streptococcus pyogenes serotype M4 (strain MGAS10750)).